The chain runs to 1046 residues: FERM, ARHGEF and pleckstrin domain-containing protein 1 (1046 aa).

Residues 40–320 enclose the FERM domain; that stretch reads ISIKIQMLDD…EHHAFFRLFE (281 aa). Positions 374 to 522 are disordered; the sequence is LTAQPSEQHA…LISPLLNDPS (149 aa). A compositionally biased stretch (basic and acidic residues) spans 413–424; sequence KELKASTEDTGQ. Over residues 458–513 the composition is skewed to polar residues; the sequence is RMQQNRPQSQQPSTAGSLTGSPHLSELSINSQGGPSVANMSLSPNLSPDAKQSSPL. A DH domain is found at 541–732; that stretch reads KAYFIAKEVA…TEMMAQLHGN (192 aa). Residues 761-858 enclose the PH 1 domain; the sequence is EFIRLGSLSK…WIEDIQMAID (98 aa). The segment at 864 to 907 is disordered; sequence SDPVPELLASSPPDNKSPDETTVDQESEDDLSASRTSLERQSPH. Residues 884-894 are compositionally biased toward acidic residues; sequence TTVDQESEDDL. Positions 933 to 1030 constitute a PH 2 domain; the sequence is ENQLSGNLLR…WMEVIRSATS (98 aa).

In terms of assembly, interacts with PLXNA4. Detected in lateral motor column motor neurons and in preganglionic autonomic motor neurons of the column of Terni in the embryonic spinal cord (at protein level).

Its subcellular location is the cell membrane. The protein resides in the synapse. It localises to the synaptosome. It is found in the cytoplasm. The protein localises to the cytosol. Its subcellular location is the cell projection. The protein resides in the filopodium. It localises to the dendrite. It is found in the dendritic spine. Functionally, functions as a guanine nucleotide exchange factor for RAC1. Plays a role in semaphorin signaling via its interaction with PLXNA4. Plays a role in the assembly and disassembly of dendritic filopodia, the formation of dendritic spines, regulation of dendrite length and ultimately the formation of synapses. The chain is FERM, ARHGEF and pleckstrin domain-containing protein 1 (FARP1) from Gallus gallus (Chicken).